A 98-amino-acid chain; its full sequence is NADH-ubiquinone oxidoreductase chain 4L (98 aa).

Transmembrane regions (helical) follow at residues 1 to 21, 29 to 49, and 61 to 81; these read MSLTYMNMFLAFTISLVGLLM, ALLCLEGMMLSLFVMMTITIL, and IILLVFAACEAALGLSLLVMV.

The protein belongs to the complex I subunit 4L family. In terms of assembly, core subunit of respiratory chain NADH dehydrogenase (Complex I) which is composed of 45 different subunits.

Its subcellular location is the mitochondrion inner membrane. It catalyses the reaction a ubiquinone + NADH + 5 H(+)(in) = a ubiquinol + NAD(+) + 4 H(+)(out). In terms of biological role, core subunit of the mitochondrial membrane respiratory chain NADH dehydrogenase (Complex I) which catalyzes electron transfer from NADH through the respiratory chain, using ubiquinone as an electron acceptor. Part of the enzyme membrane arm which is embedded in the lipid bilayer and involved in proton translocation. In Rhinophylla pumilio (Dwarf little fruit bat), this protein is NADH-ubiquinone oxidoreductase chain 4L (MT-ND4L).